A 173-amino-acid polypeptide reads, in one-letter code: ATP synthase subunit b (173 aa).

A helical transmembrane segment spans residues 15–35 (GVEWGTVIVQVLTFIVLLALL).

This sequence belongs to the ATPase B chain family. As to quaternary structure, F-type ATPases have 2 components, F(1) - the catalytic core - and F(0) - the membrane proton channel. F(1) has five subunits: alpha(3), beta(3), gamma(1), delta(1), epsilon(1). F(0) has three main subunits: a(1), b(2) and c(10-14). The alpha and beta chains form an alternating ring which encloses part of the gamma chain. F(1) is attached to F(0) by a central stalk formed by the gamma and epsilon chains, while a peripheral stalk is formed by the delta and b chains.

It is found in the cell membrane. Functionally, f(1)F(0) ATP synthase produces ATP from ADP in the presence of a proton or sodium gradient. F-type ATPases consist of two structural domains, F(1) containing the extramembraneous catalytic core and F(0) containing the membrane proton channel, linked together by a central stalk and a peripheral stalk. During catalysis, ATP synthesis in the catalytic domain of F(1) is coupled via a rotary mechanism of the central stalk subunits to proton translocation. In terms of biological role, component of the F(0) channel, it forms part of the peripheral stalk, linking F(1) to F(0). The polypeptide is ATP synthase subunit b (Staphylococcus aureus (strain MRSA252)).